We begin with the raw amino-acid sequence, 182 residues long: Large ribosomal subunit protein bL25 (182 aa).

The protein belongs to the bacterial ribosomal protein bL25 family. CTC subfamily. As to quaternary structure, part of the 50S ribosomal subunit; part of the 5S rRNA/L5/L18/L25 subcomplex. Contacts the 5S rRNA. Binds to the 5S rRNA independently of L5 and L18.

This is one of the proteins that binds to the 5S RNA in the ribosome where it forms part of the central protuberance. In Borreliella burgdorferi (strain ATCC 35210 / DSM 4680 / CIP 102532 / B31) (Borrelia burgdorferi), this protein is Large ribosomal subunit protein bL25.